The chain runs to 524 residues: MIFKKRKGQLTLEFILLILGMTVVGIVITMGLVEKSPIFIGDKPLEVKKETMGLFINESKFNLTVENTTISNLGNNNTESNNSNNETGGGYLYIRVSGSSKGLITKDLIVSGDAKDVSGDISKTINSKCVEENAIGEVYGDIYLEGSANYKLGNLLCINKFQTYLTGSGSLKVYVPYIQEFIIRDKNSGESQIGGSVSLTVGNTNINRFYVEKITGGAKVKFKDFAINTFETNSGNFGGGAETVFENGRISTMKLGDIVSGGNVKFKNVNIGNMIINNMIGSPTFELSNSTINNMKINKLIGSPKILVEDSSIINSLETDQLGGSDIEVKDGSIIKEITIHGSTGTNGKIFVGYGGKVEKLFVEGNINSRIDLKGFSGLIDVSIGNIAGGGKLYVDNVIGNSISTGIIGNNKGLEIEDSSLSVVNIEGVSNSGSAFIKNTLIYQLKINSLPDWGSDMTLNKVNITKLSINEIRNGKLTIKNSEIGELHITKISGKGKIIVKKSYVNGKYYKKLVIKKSNYKKWS.

The helical transmembrane segment at 13–33 (EFILLILGMTVVGIVITMGLV) threads the bilayer.

Its subcellular location is the membrane. This is an uncharacterized protein from Methanocaldococcus jannaschii (strain ATCC 43067 / DSM 2661 / JAL-1 / JCM 10045 / NBRC 100440) (Methanococcus jannaschii).